Here is a 406-residue protein sequence, read N- to C-terminus: Succinylornithine transaminase (406 aa).

Lysine 252 is modified (N6-(pyridoxal phosphate)lysine).

The protein belongs to the class-III pyridoxal-phosphate-dependent aminotransferase family. AstC subfamily. The cofactor is pyridoxal 5'-phosphate.

It catalyses the reaction N(2)-succinyl-L-ornithine + 2-oxoglutarate = N-succinyl-L-glutamate 5-semialdehyde + L-glutamate. It participates in amino-acid degradation; L-arginine degradation via AST pathway; L-glutamate and succinate from L-arginine: step 3/5. In terms of biological role, catalyzes the transamination of N(2)-succinylornithine and alpha-ketoglutarate into N(2)-succinylglutamate semialdehyde and glutamate. Can also act as an acetylornithine aminotransferase. The chain is Succinylornithine transaminase from Citrobacter koseri (strain ATCC BAA-895 / CDC 4225-83 / SGSC4696).